The primary structure comprises 174 residues: FMN reductase (NADH) RutF (174 aa).

This sequence belongs to the non-flavoprotein flavin reductase family. RutF subfamily.

It catalyses the reaction FMNH2 + NAD(+) = FMN + NADH + 2 H(+). Its function is as follows. Catalyzes the reduction of FMN to FMNH2 which is used to reduce pyrimidine by RutA via the Rut pathway. This is FMN reductase (NADH) RutF from Agrobacterium fabrum (strain C58 / ATCC 33970) (Agrobacterium tumefaciens (strain C58)).